Here is a 218-residue protein sequence, read N- to C-terminus: Methylthioribulose-1-phosphate dehydratase (218 aa).

Zn(2+)-binding residues include histidine 107 and histidine 109.

It belongs to the aldolase class II family. MtnB subfamily. Requires Zn(2+) as cofactor.

It catalyses the reaction 5-(methylsulfanyl)-D-ribulose 1-phosphate = 5-methylsulfanyl-2,3-dioxopentyl phosphate + H2O. The protein operates within amino-acid biosynthesis; L-methionine biosynthesis via salvage pathway; L-methionine from S-methyl-5-thio-alpha-D-ribose 1-phosphate: step 2/6. Functionally, catalyzes the dehydration of methylthioribulose-1-phosphate (MTRu-1-P) into 2,3-diketo-5-methylthiopentyl-1-phosphate (DK-MTP-1-P). This is Methylthioribulose-1-phosphate dehydratase from Xylella fastidiosa (strain 9a5c).